Reading from the N-terminus, the 420-residue chain is Napsin-A (420 aa).

The N-terminal stretch at 1–25 is a signal peptide; the sequence is MSPPPLLQPLLLLLPLLNVEPSGAT. Residues 26-63 constitute a propeptide, activation peptide; it reads LIRIPLHRVQPGRRILNLLRGWREPAELPKLGAPSPGD. One can recognise a Peptidase A1 domain in the interval 78-399; that stretch reads YFGEIGLGTP…MKSSARVGLA (322 aa). A glycan (N-linked (GlcNAc...) asparagine) is linked at Asn90. Asp96 is an active-site residue. A disulfide bond links Cys109 and Cys116. Asn133 is a glycosylation site (N-linked (GlcNAc...) asparagine). The cysteines at positions 274 and 278 are disulfide-linked. The active site involves Asp283. Cysteines 317 and 354 form a disulfide. The N-linked (GlcNAc...) asparagine glycan is linked to Asn336.

It belongs to the peptidase A1 family. Expressed predominantly in adult lung (type II pneumocytes) and kidney and in fetal lung. Low levels in adult spleen and very low levels in peripheral blood leukocytes.

Its subcellular location is the secreted. Its function is as follows. May be involved in processing of pneumocyte surfactant precursors. This Homo sapiens (Human) protein is Napsin-A (NAPSA).